Here is a 195-residue protein sequence, read N- to C-terminus: Kiwa protein KwaA (195 aa).

3 helical membrane-spanning segments follow: residues 10–30 (GLYI…TAKI), 46–66 (LVLT…SIYF), and 117–137 (IAYL…DKYY).

The protein localises to the cell inner membrane. Functionally, component of antiviral defense system Kiwa, composed of KwaA and KwaB. Expression of Kiwa in E.coli (strain MG1655) confers resistance to phages lambda and SECphi18. This chain is Kiwa protein KwaA, found in Escherichia coli O55:H7 (strain RM12579 / EPEC).